A 135-amino-acid polypeptide reads, in one-letter code: MINTKPPEIYALGQHISMSADKARRIIDRIRGRSYEETLLILELMPYRAAYPIFKLVYSAASNASYTLASNEANLVIIKAEVNEGPAIKKLKPRARGRCYPIKRPTCHITIVLKDISFYDSDSESVELNLLKKAR.

This sequence belongs to the universal ribosomal protein uL22 family. Part of the 50S ribosomal subunit.

It is found in the plastid. Its function is as follows. This protein binds specifically to 23S rRNA. The globular domain of the protein is located near the polypeptide exit tunnel on the outside of the subunit, while an extended beta-hairpin is found that lines the wall of the exit tunnel in the center of the 70S ribosome. This chain is Large ribosomal subunit protein uL22c (rpl22), found in Cuscuta exaltata (Tall dodder).